The chain runs to 419 residues: Serine hydroxymethyltransferase 2 (419 aa).

Residues Leu120 and 124-126 (GHL) each bind (6S)-5,6,7,8-tetrahydrofolate. Lys229 is subject to N6-(pyridoxal phosphate)lysine.

This sequence belongs to the SHMT family. As to quaternary structure, homodimer. It depends on pyridoxal 5'-phosphate as a cofactor.

The protein localises to the cytoplasm. The catalysed reaction is (6R)-5,10-methylene-5,6,7,8-tetrahydrofolate + glycine + H2O = (6S)-5,6,7,8-tetrahydrofolate + L-serine. It functions in the pathway one-carbon metabolism; tetrahydrofolate interconversion. It participates in amino-acid biosynthesis; glycine biosynthesis; glycine from L-serine: step 1/1. In terms of biological role, catalyzes the reversible interconversion of serine and glycine with tetrahydrofolate (THF) serving as the one-carbon carrier. This reaction serves as the major source of one-carbon groups required for the biosynthesis of purines, thymidylate, methionine, and other important biomolecules. Also exhibits THF-independent aldolase activity toward beta-hydroxyamino acids, producing glycine and aldehydes, via a retro-aldol mechanism. This Salmonella typhi protein is Serine hydroxymethyltransferase 2.